We begin with the raw amino-acid sequence, 849 residues long: Aminopeptidase N (849 aa).

Residues E122 and 259 to 263 (GAMEN) each bind substrate. A Zn(2+)-binding site is contributed by H294. Residue E295 is the Proton acceptor of the active site. Positions 298 and 317 each coordinate Zn(2+).

This sequence belongs to the peptidase M1 family. In terms of assembly, monomer. Zn(2+) serves as cofactor.

It localises to the cytoplasm. The enzyme catalyses Release of an N-terminal amino acid, Xaa-|-Yaa- from a peptide, amide or arylamide. Xaa is preferably Ala, but may be most amino acids including Pro (slow action). When a terminal hydrophobic residue is followed by a prolyl residue, the two may be released as an intact Xaa-Pro dipeptide.. Its function is as follows. Aminopeptidase with broad substrate specificity to several peptides. It has more affinity for oligopeptides than for dipeptides. It plays an essential role in the metabolism, it may be involved in nitrogen supply or protein turnover. In Lactococcus lactis subsp. lactis (Streptococcus lactis), this protein is Aminopeptidase N (pepN).